Reading from the N-terminus, the 579-residue chain is Deleted in azoospermia protein 4 (579 aa).

Polar residues predominate over residues 1-10; it reads MSAANPETPN. The tract at residues 1–27 is disordered; it reads MSAANPETPNSTISREASTQSSSAAAS. Residues 11–27 are compositionally biased toward low complexity; sequence STISREASTQSSSAAAS. One can recognise an RRM 1 domain in the interval 40 to 115; sequence NTVFVGGIDA…KKLKLGPAIR (76 aa). Polar residues predominate over residues 163–175; sequence QHVQSAANPETPN. The tract at residues 163–192 is disordered; it reads QHVQSAANPETPNSTISREASTQSSSAAAS. Residues 176–192 show a composition bias toward low complexity; the sequence is STISREASTQSSSAAAS. Residues 205–280 form the RRM 2 domain; the sequence is NTVFVGGIDA…KKLKLGPAIR (76 aa). DAZ domains lie at 332-355, 356-379, 380-403, 404-427, 428-451, 452-475, 476-499, 500-523, and 524-547; these read AYSA…YNYQ, EYPT…YNYQ, PFPA…YNYQ, and AFPA…YNYQ.

This sequence belongs to the RRM DAZ family. In terms of assembly, forms a heterodimer with BOLL and DAZL. Interacts with PUM2, DAZAP1, DAZAP2, DZIP1 and DZIP3. As to expression, testis-specific. Expression restricted to premeiotic germ cells, particularly in spermatogonia (at protein level).

It is found in the cytoplasm. The protein localises to the nucleus. Its function is as follows. RNA-binding protein that plays an essential role in spermatogenesis. May act by binding to the 3'-UTR of mRNAs and regulating their translation. This is Deleted in azoospermia protein 4 (DAZ4) from Homo sapiens (Human).